Reading from the N-terminus, the 244-residue chain is 5-oxoprolinase subunit A (244 aa).

The protein belongs to the LamB/PxpA family. As to quaternary structure, forms a complex composed of PxpA, PxpB and PxpC.

The enzyme catalyses 5-oxo-L-proline + ATP + 2 H2O = L-glutamate + ADP + phosphate + H(+). Catalyzes the cleavage of 5-oxoproline to form L-glutamate coupled to the hydrolysis of ATP to ADP and inorganic phosphate. The sequence is that of 5-oxoprolinase subunit A from Escherichia coli O139:H28 (strain E24377A / ETEC).